We begin with the raw amino-acid sequence, 437 residues long: GTPase Der (437 aa).

EngA-type G domains lie at 2–167 (ATVL…EKKG) and 180–356 (IRVA…NSLF). GTP contacts are provided by residues 8–15 (GKSNVGKS), 55–59 (DTCGI), 118–121 (NKSE), 186–193 (GRPNAGKS), 233–237 (DTAGL), and 299–302 (NKID). In terms of domain architecture, KH-like spans 357–437 (YRVQTSAVNA…PIFLKFKNRH (81 aa)).

Belongs to the TRAFAC class TrmE-Era-EngA-EngB-Septin-like GTPase superfamily. EngA (Der) GTPase family. Associates with the 50S ribosomal subunit.

GTPase that plays an essential role in the late steps of ribosome biogenesis. The polypeptide is GTPase Der (Thermosipho melanesiensis (strain DSM 12029 / CIP 104789 / BI429)).